The sequence spans 295 residues: uncharacterized protein (295 aa).

2 disordered regions span residues 33-52 (VDAPPASQIPGLSNLGDSHS) and 180-295 (LSKA…AELK). Serine 50 bears the Phosphoserine mark. 2 stretches are compositionally biased toward polar residues: residues 205 to 217 (QKNSSPTNFSKLI) and 241 to 251 (TSRASVLSQSP). Residues 267-276 (EASEGPEDTP) are compositionally biased toward acidic residues. Residues 277–289 (ESSQSPEESVSAS) show a composition bias toward low complexity.

This is an uncharacterized protein from Homo sapiens (Human).